The sequence spans 432 residues: Transcriptional adapter 3 (432 aa).

A Glycyl lysine isopeptide (Lys-Gly) (interchain with G-Cter in SUMO2) cross-link involves residue lysine 21. A coiled-coil region spans residues 40 to 69; that stretch reads IEELDTLQLELETLLSSASRRLRVLEAETQ. A disordered region spans residues 87–127; that stretch reads GRDHELGAPPKHGKPKKQKLEGKAGHGPGPGPGRPKSKNLQ. Lysine 129 participates in a covalent cross-link: Glycyl lysine isopeptide (Lys-Gly) (interchain with G-Cter in SUMO2). Composition is skewed to basic and acidic residues over residues 211–223 and 232–251; these read DGAR…DKKK and LDTK…HEQP. 2 disordered regions span residues 211–257 and 271–319; these read DGAR…GCPF and ENII…SRIK. Phosphoserine occurs at positions 280 and 298. Residues 295-305 show a composition bias toward polar residues; it reads ASTSPRNQNKP. Residues 367–407 are a coiled coil; that stretch reads LLRLAKEEVSRQELRQRVRMADNEVMDAFRKIMAARQKKRT. An N6-acetyllysine modification is found at lysine 418.

It belongs to the NGG1 family. The PCAF complex is composed of a number of TBP-associated factors (TAFS), such as TAF5, TAF5L, TAF6, TAF6L, TAF9, TAF10 and TAF12, PCAF, and also PCAF-associated factors (PAFs), such as TADA2L/ADA2, TADA3L/ADA3 and SPT3. Interacts directly with TADA2L and PCAF and also with the high-risk HPV oncoprotein E6. Component of the STAGA transcription coactivator-HAT complex, at least composed of SUPT3H, GCN5L2, TAF5L, TAF6L, SUPT7L, TADA3L, TAD1L, TAF10, TAF12, TRRAP and TAF9. Component of the TFTC-HAT complex. Component of the ADA2A-containing complex (ATAC), composed of KAT14, KAT2A, TADA2L, TADA3L, ZZ3, MBIP, WDR5, YEATS2, CCDC101 and DR1.

Its subcellular location is the nucleus. Functions as a component of the PCAF complex. The PCAF complex is capable of efficiently acetylating histones in a nucleosomal context. The PCAF complex could be considered as the human version of the yeast SAGA complex. Also known as a coactivator for p53/TP53-dependent transcriptional activation. Component of the ATAC complex, a complex with histone acetyltransferase activity on histones H3 and H4. In Pongo abelii (Sumatran orangutan), this protein is Transcriptional adapter 3 (TADA3).